The following is a 427-amino-acid chain: Serine--tRNA ligase (427 aa).

Position 231 to 233 (231 to 233) interacts with L-serine; sequence TAE. 262–264 is an ATP binding site; sequence RSE. An L-serine-binding site is contributed by Glu285. Residue 349–352 coordinates ATP; sequence EISS. Position 385 (Ser385) interacts with L-serine.

The protein belongs to the class-II aminoacyl-tRNA synthetase family. Type-1 seryl-tRNA synthetase subfamily. In terms of assembly, homodimer. The tRNA molecule binds across the dimer.

It is found in the cytoplasm. It carries out the reaction tRNA(Ser) + L-serine + ATP = L-seryl-tRNA(Ser) + AMP + diphosphate + H(+). The enzyme catalyses tRNA(Sec) + L-serine + ATP = L-seryl-tRNA(Sec) + AMP + diphosphate + H(+). Its pathway is aminoacyl-tRNA biosynthesis; selenocysteinyl-tRNA(Sec) biosynthesis; L-seryl-tRNA(Sec) from L-serine and tRNA(Sec): step 1/1. Functionally, catalyzes the attachment of serine to tRNA(Ser). Is also able to aminoacylate tRNA(Sec) with serine, to form the misacylated tRNA L-seryl-tRNA(Sec), which will be further converted into selenocysteinyl-tRNA(Sec). This Brucella abortus (strain S19) protein is Serine--tRNA ligase.